Reading from the N-terminus, the 242-residue chain is Probable transcriptional regulatory protein HEAR0561 (242 aa).

The protein belongs to the TACO1 family.

It localises to the cytoplasm. In Herminiimonas arsenicoxydans, this protein is Probable transcriptional regulatory protein HEAR0561.